Here is a 192-residue protein sequence, read N- to C-terminus: Adenylate kinase (192 aa).

Position 10 to 18 (10 to 18) interacts with ATP; sequence GVPGVGSTT.

This sequence belongs to the archaeal adenylate kinase family. As to quaternary structure, monomer.

The protein resides in the cytoplasm. The catalysed reaction is AMP + ATP = 2 ADP. The polypeptide is Adenylate kinase (adkA) (Methanocaldococcus jannaschii (strain ATCC 43067 / DSM 2661 / JAL-1 / JCM 10045 / NBRC 100440) (Methanococcus jannaschii)).